We begin with the raw amino-acid sequence, 876 residues long: Extended synaptotagmin-2-B (876 aa).

Residues Met1–Pro21 form a disordered region. Topologically, residues Met1–Gly35 are cytoplasmic. A helical transmembrane segment spans residues Met36 to Phe56. Residues Pro57–Tyr59 are Lumenal-facing. The helical transmembrane segment at Val60–Trp80 threads the bilayer. Residues Trp81 to Ser876 are Cytoplasmic-facing. Positions Asp123–Val302 constitute an SMP-LTD domain. 2 consecutive C2 domains span residues Leu301–Phe421 and Asn446–Asn592. 9 residues coordinate Ca(2+): Lys332, Asp333, Asp345, Asp392, Glu393, Asp394, Asp396, Asp398, and Asp399. Residues Val614–Asp714 form a disordered region. Residues Pro636 to Pro656 are compositionally biased toward pro residues. Low complexity predominate over residues Ser686–Ser698. Residues Pro741–Phe863 form the C2 3 domain. The interval Lys788–Lys795 is required for phosphatidylinositol 4,5-bisphosphate-dependent location at the cell membrane.

It belongs to the extended synaptotagmin family. In terms of assembly, interacts with fgfr1 that has been activated by fgf1 binding. Interacts (via C2 domains) with the AP-2 complex (via an alpha subunit). Identified in a complex with the AP-2 complex and fgfr1.

The protein resides in the cell membrane. Its subcellular location is the endoplasmic reticulum membrane. Its function is as follows. Tethers the endoplasmic reticulum to the cell membrane and promotes the formation of appositions between the endoplasmic reticulum and the cell membrane. Binds glycerophospholipids in a barrel-like domain and may play a role in cellular lipid transport. Plays a role in the rapid internalization of fgfr1 that has been activated by fgf1 binding; this occurs most likely via the AP-2 complex. Required for normal fgf signaling and the activation of downstream signaling cascades via its role in the internalization of activated fgfr1. Required for normal embryonic development via its role in fgf signaling and the downstream regulation of t/xBRA expression. This is Extended synaptotagmin-2-B (esyt2-b) from Xenopus laevis (African clawed frog).